A 233-amino-acid chain; its full sequence is Large ribosomal subunit protein uL1 (233 aa).

The protein belongs to the universal ribosomal protein uL1 family. In terms of assembly, part of the 50S ribosomal subunit.

In terms of biological role, binds directly to 23S rRNA. The L1 stalk is quite mobile in the ribosome, and is involved in E site tRNA release. Protein L1 is also a translational repressor protein, it controls the translation of the L11 operon by binding to its mRNA. The polypeptide is Large ribosomal subunit protein uL1 (Finegoldia magna (strain ATCC 29328 / DSM 20472 / WAL 2508) (Peptostreptococcus magnus)).